The primary structure comprises 263 residues: Tropinone reductase homolog At2g29300 (263 aa).

An NADP(+)-binding site is contributed by 13-37 (LVTGAASGIGYAIVEELAGFGARIH). Position 146 (Ser-146) interacts with substrate. The active-site Proton acceptor is Tyr-160.

This sequence belongs to the short-chain dehydrogenases/reductases (SDR) family. SDR65C subfamily.

In Arabidopsis thaliana (Mouse-ear cress), this protein is Tropinone reductase homolog At2g29300.